The sequence spans 507 residues: Carboxypeptidase sxa2 (507 aa).

Residues 1–22 (MLSLFLKSLFAIIIIELTIIHA) form the signal peptide. N-linked (GlcNAc...) asparagine glycans are attached at residues Asn-38 and Asn-45. The tract at residues 41 to 64 (SASSNQTVQPRQHAAPSSDRIKSL) is disordered. The active site involves Ser-200. N-linked (GlcNAc...) asparagine glycosylation is found at Asn-259, Asn-260, and Asn-300. The active site involves Asp-434. N-linked (GlcNAc...) asparagine glycosylation is present at Asn-448. His-487 is a catalytic residue.

It belongs to the peptidase S10 family.

It localises to the secreted. Its function is as follows. Involved in degradation or processing of the mating pheromones. Its loss causes a persistent response to the pheromones. It may be required for stabilization of enzymes that are essential for zygote formation. May degrade the mating pheromone P-factor. In Schizosaccharomyces pombe (strain 972 / ATCC 24843) (Fission yeast), this protein is Carboxypeptidase sxa2 (sxa2).